A 108-amino-acid polypeptide reads, in one-letter code: UPF0060 membrane protein YnfA (108 aa).

Over M1–T5 the chain is Periplasmic. Residues L6–L26 form a helical membrane-spanning segment. Topologically, residues K27–A30 are cytoplasmic. Residues S31–L51 traverse the membrane as a helical segment. At H52–Y60 the chain is on the periplasmic side. A helical membrane pass occupies residues A61–V81. Residues K82–T84 are Cytoplasmic-facing. A helical membrane pass occupies residues L85–W105. Topologically, residues G106–T108 are periplasmic.

The protein belongs to the UPF0060 family.

It is found in the cell inner membrane. This is UPF0060 membrane protein YnfA from Shigella dysenteriae serotype 1 (strain Sd197).